Consider the following 288-residue polypeptide: Alpha/beta hydrolase domain-containing protein 17B (288 aa).

Residues Ser-170, Asp-235, and His-264 each act as charge relay system in the active site. At Ser-282 the chain carries Phosphoserine.

The protein belongs to the AB hydrolase superfamily. ABHD17 family. In terms of processing, palmitoylated on cysteine residues located in a cysteine cluster at the N-terminus which promotes membrane localization. Palmitoylation is required for post-synaptic localization and for depalmitoylating activity towards DLG4/PSD95.

It localises to the cell membrane. The protein resides in the recycling endosome membrane. Its subcellular location is the cell projection. The protein localises to the dendritic spine. It is found in the postsynaptic density membrane. It carries out the reaction S-hexadecanoyl-L-cysteinyl-[protein] + H2O = L-cysteinyl-[protein] + hexadecanoate + H(+). Inhibited by palmostatin-B. Hydrolyzes fatty acids from S-acylated cysteine residues in proteins. Has depalmitoylating activity towards DLG4/PSD95. Has depalmitoylating activity towards GAP43. Has depalmitoylating activity towards MAP6. Has depalmitoylating activity towards NRAS. In Homo sapiens (Human), this protein is Alpha/beta hydrolase domain-containing protein 17B.